The sequence spans 226 residues: 3-dehydroquinate dehydratase (226 aa).

3-dehydroquinate is bound by residues 33 to 35 and Arg65; that span reads ELR. The Proton donor/acceptor role is filled by His120. Residue Lys147 is the Schiff-base intermediate with substrate of the active site. Residues Arg186, Ser205, and Gln209 each contribute to the 3-dehydroquinate site.

This sequence belongs to the type-I 3-dehydroquinase family. In terms of assembly, homodimer.

The enzyme catalyses 3-dehydroquinate = 3-dehydroshikimate + H2O. Its pathway is metabolic intermediate biosynthesis; chorismate biosynthesis; chorismate from D-erythrose 4-phosphate and phosphoenolpyruvate: step 3/7. Its function is as follows. Involved in the third step of the chorismate pathway, which leads to the biosynthesis of aromatic amino acids. Catalyzes the cis-dehydration of 3-dehydroquinate (DHQ) and introduces the first double bond of the aromatic ring to yield 3-dehydroshikimate. The sequence is that of 3-dehydroquinate dehydratase from Thermodesulfovibrio yellowstonii (strain ATCC 51303 / DSM 11347 / YP87).